We begin with the raw amino-acid sequence, 142 residues long: HTH-type transcriptional regulator MntR (142 aa).

One can recognise an HTH dtxR-type domain in the interval M1–T63. Mn(2+) is bound by residues D8, E11, H77, E99, E102, and H103.

The protein belongs to the DtxR/MntR family. As to quaternary structure, homodimer.

The protein resides in the cytoplasm. Its activity is regulated as follows. DNA binding is strongly activated by Mn(2+). Its function is as follows. Central regulator of manganese homeostasis. The polypeptide is HTH-type transcriptional regulator MntR (Bacillus cereus (strain G9842)).